Consider the following 157-residue polypeptide: Cyclic pyranopterin monophosphate synthase (157 aa).

Residues 75-77 and 111-112 contribute to the substrate site; these read LCH and ME. Asp-126 is an active-site residue.

Belongs to the MoaC family. Homohexamer; trimer of dimers.

The catalysed reaction is (8S)-3',8-cyclo-7,8-dihydroguanosine 5'-triphosphate = cyclic pyranopterin phosphate + diphosphate. It participates in cofactor biosynthesis; molybdopterin biosynthesis. In terms of biological role, catalyzes the conversion of (8S)-3',8-cyclo-7,8-dihydroguanosine 5'-triphosphate to cyclic pyranopterin monophosphate (cPMP). This chain is Cyclic pyranopterin monophosphate synthase, found in Novosphingobium aromaticivorans (strain ATCC 700278 / DSM 12444 / CCUG 56034 / CIP 105152 / NBRC 16084 / F199).